The following is a 363-amino-acid chain: Biotin synthase (363 aa).

The region spanning Asn-40–Arg-268 is the Radical SAM core domain. [4Fe-4S] cluster is bound by residues Cys-55, Cys-59, and Cys-62. Residues Cys-99, Cys-131, Cys-191, and Arg-263 each contribute to the [2Fe-2S] cluster site.

This sequence belongs to the radical SAM superfamily. Biotin synthase family. In terms of assembly, homodimer. Requires [4Fe-4S] cluster as cofactor. It depends on [2Fe-2S] cluster as a cofactor.

It carries out the reaction (4R,5S)-dethiobiotin + (sulfur carrier)-SH + 2 reduced [2Fe-2S]-[ferredoxin] + 2 S-adenosyl-L-methionine = (sulfur carrier)-H + biotin + 2 5'-deoxyadenosine + 2 L-methionine + 2 oxidized [2Fe-2S]-[ferredoxin]. Its pathway is cofactor biosynthesis; biotin biosynthesis; biotin from 7,8-diaminononanoate: step 2/2. Catalyzes the conversion of dethiobiotin (DTB) to biotin by the insertion of a sulfur atom into dethiobiotin via a radical-based mechanism. This is Biotin synthase from Flavobacterium johnsoniae (strain ATCC 17061 / DSM 2064 / JCM 8514 / BCRC 14874 / CCUG 350202 / NBRC 14942 / NCIMB 11054 / UW101) (Cytophaga johnsonae).